A 98-amino-acid chain; its full sequence is Large ribosomal subunit protein uL23 (98 aa).

The protein belongs to the universal ribosomal protein uL23 family. In terms of assembly, part of the 50S ribosomal subunit. Contacts protein L29, and trigger factor when it is bound to the ribosome.

Its function is as follows. One of the early assembly proteins it binds 23S rRNA. One of the proteins that surrounds the polypeptide exit tunnel on the outside of the ribosome. Forms the main docking site for trigger factor binding to the ribosome. The polypeptide is Large ribosomal subunit protein uL23 (Herpetosiphon aurantiacus (strain ATCC 23779 / DSM 785 / 114-95)).